A 361-amino-acid chain; its full sequence is Glucose 1-dehydrogenase (361 aa).

C41 serves as a coordination point for Zn(2+). A substrate-binding site is contributed by T43. Residues H68 and E69 each contribute to the Zn(2+) site. Substrate contacts are provided by E119, E156, and N160. E156 serves as a coordination point for Zn(2+). NADP(+)-binding positions include 216–218 (NRH), 275–277 (FGT), 304–306 (SVD), and K349. Substrate is bound at residue D306.

It belongs to the zinc-containing alcohol dehydrogenase family. Glucose 1-dehydrogenase subfamily. Homotetramer. Requires Zn(2+) as cofactor.

The enzyme catalyses D-glucose + NAD(+) = D-glucono-1,5-lactone + NADH + H(+). It carries out the reaction D-glucose + NADP(+) = D-glucono-1,5-lactone + NADPH + H(+). The catalysed reaction is D-galactose + NAD(+) = D-galactono-1,4-lactone + NADH + H(+). It catalyses the reaction D-galactose + NADP(+) = D-galactono-1,5-lactone + NADPH + H(+). Its function is as follows. Catalyzes the NAD(P)(+)-dependent oxidation of D-glucose to D-gluconate via gluconolactone. Is also significantly active with galactose as substrate, but not with mannose or glucose 6-phosphate. Can utilize both NAD(+) and NADP(+) as electron acceptor, with a marked preference for NADP(+). Physiologically, may be involved in the degradation of both glucose and galactose through a non-phosphorylative variant of the Entner-Doudoroff pathway. This Thermoplasma acidophilum (strain ATCC 25905 / DSM 1728 / JCM 9062 / NBRC 15155 / AMRC-C165) protein is Glucose 1-dehydrogenase.